Here is a 634-residue protein sequence, read N- to C-terminus: 1-deoxy-D-xylulose-5-phosphate synthase (634 aa).

Residues H73 and 114–116 (GHS) each bind thiamine diphosphate. D145 is a binding site for Mg(2+). Thiamine diphosphate is bound by residues 146-147 (GS), N174, F285, and E367. A Mg(2+)-binding site is contributed by N174.

Belongs to the transketolase family. DXPS subfamily. Homodimer. Requires Mg(2+) as cofactor. It depends on thiamine diphosphate as a cofactor.

The catalysed reaction is D-glyceraldehyde 3-phosphate + pyruvate + H(+) = 1-deoxy-D-xylulose 5-phosphate + CO2. It functions in the pathway metabolic intermediate biosynthesis; 1-deoxy-D-xylulose 5-phosphate biosynthesis; 1-deoxy-D-xylulose 5-phosphate from D-glyceraldehyde 3-phosphate and pyruvate: step 1/1. Its function is as follows. Catalyzes the acyloin condensation reaction between C atoms 2 and 3 of pyruvate and glyceraldehyde 3-phosphate to yield 1-deoxy-D-xylulose-5-phosphate (DXP). The chain is 1-deoxy-D-xylulose-5-phosphate synthase from Syntrophotalea carbinolica (strain DSM 2380 / NBRC 103641 / GraBd1) (Pelobacter carbinolicus).